The sequence spans 446 residues: Phosphoglucosamine mutase (446 aa).

Ser100 acts as the Phosphoserine intermediate in catalysis. Positions 100, 239, 241, and 243 each coordinate Mg(2+). Residue Ser100 is modified to Phosphoserine.

This sequence belongs to the phosphohexose mutase family. Requires Mg(2+) as cofactor. In terms of processing, activated by phosphorylation.

The catalysed reaction is alpha-D-glucosamine 1-phosphate = D-glucosamine 6-phosphate. Its function is as follows. Catalyzes the conversion of glucosamine-6-phosphate to glucosamine-1-phosphate. This chain is Phosphoglucosamine mutase, found in Oceanobacillus iheyensis (strain DSM 14371 / CIP 107618 / JCM 11309 / KCTC 3954 / HTE831).